The chain runs to 311 residues: Beta-lactamase (311 aa).

Positions 1 to 34 (MRLTQAPPSRRTLMTLGAGATMAALLPAGGAAYA) form a signal peptide, tat-type signal. Serine 87 functions as the Acyl-ester intermediate in the catalytic mechanism. Substrate is bound at residue 255–257 (KTG).

It belongs to the class-A beta-lactamase family. Predicted to be exported by the Tat system. The position of the signal peptide cleavage has not been experimentally proven.

The catalysed reaction is a beta-lactam + H2O = a substituted beta-amino acid. The chain is Beta-lactamase (bla) from Kitasatospora aureofaciens (Streptomyces aureofaciens).